A 56-amino-acid polypeptide reads, in one-letter code: Large ribosomal subunit protein bL32 (56 aa).

The tract at residues 1 to 34 (MAVQQNKKSRSKRGMRRSHDSLSTAQLSVDATSG) is disordered. The segment covering 7 to 16 (KKSRSKRGMR) has biased composition (basic residues). The segment covering 21–31 (SLSTAQLSVDA) has biased composition (polar residues).

Belongs to the bacterial ribosomal protein bL32 family.

This Shewanella frigidimarina (strain NCIMB 400) protein is Large ribosomal subunit protein bL32.